Reading from the N-terminus, the 484-residue chain is Glutamyl-tRNA(Gln) amidotransferase subunit B, mitochondrial (484 aa).

Belongs to the GatB/GatE family. GatB subfamily. As to quaternary structure, subunit of the heterotrimeric GatFAB amidotransferase (AdT) complex, composed of A, B and F subunits.

It localises to the mitochondrion. The enzyme catalyses L-glutamyl-tRNA(Gln) + L-glutamine + ATP + H2O = L-glutaminyl-tRNA(Gln) + L-glutamate + ADP + phosphate + H(+). Its function is as follows. Allows the formation of correctly charged Gln-tRNA(Gln) through the transamidation of misacylated Glu-tRNA(Gln) in the mitochondria. The reaction takes place in the presence of glutamine and ATP through an activated gamma-phospho-Glu-tRNA(Gln). This Candida tropicalis (strain ATCC MYA-3404 / T1) (Yeast) protein is Glutamyl-tRNA(Gln) amidotransferase subunit B, mitochondrial.